A 472-amino-acid polypeptide reads, in one-letter code: Methanethiol oxidase (472 aa).

An N-acetylalanine modification is found at alanine 2. Serine 467 carries the phosphoserine modification.

Belongs to the selenium-binding protein family. In terms of assembly, interacts with USP33. Post-translationally, the N-terminus is blocked.

The protein resides in the nucleus. The protein localises to the cytoplasm. It localises to the cytosol. Its subcellular location is the membrane. It catalyses the reaction methanethiol + O2 + H2O = hydrogen sulfide + formaldehyde + H2O2 + H(+). It functions in the pathway organosulfur degradation. In terms of biological role, catalyzes the oxidation of methanethiol, an organosulfur compound known to be produced in substantial amounts by gut bacteria. Selenium-binding protein which may be involved in the sensing of reactive xenobiotics in the cytoplasm. May be involved in intra-Golgi protein transport. The protein is Methanethiol oxidase (SELENBP1) of Bos taurus (Bovine).